A 520-amino-acid chain; its full sequence is Membrane-bound glycerophospholipid O-acyltransferase 2 (520 aa).

6 consecutive transmembrane segments (helical) span residues 22 to 42 (PIDQ…AIWF), 61 to 81 (TLLG…HFLV), 88 to 108 (CIMI…FALG), 184 to 204 (FMGI…FIEG), 237 to 257 (LLVC…LPVE), and 264 to 284 (FQAT…LLAA). Residues Asn-342 and His-373 contribute to the active site. 3 helical membrane-spanning segments follow: residues 366–386 (FILS…FLTG), 416–436 (VITW…FVLL), and 444–464 (FYSS…LLLP).

This sequence belongs to the membrane-bound acyltransferase family. In terms of tissue distribution, expressed in neutrophils.

The protein localises to the endoplasmic reticulum membrane. It carries out the reaction a 1-acyl-sn-glycero-3-phosphocholine + an acyl-CoA = a 1,2-diacyl-sn-glycero-3-phosphocholine + CoA. The enzyme catalyses a 1-acyl-sn-glycero-3-phosphoethanolamine + an acyl-CoA = a 1,2-diacyl-sn-glycero-3-phosphoethanolamine + CoA. The catalysed reaction is a 1-acyl-sn-glycero-3-phosphate + an acyl-CoA = a 1,2-diacyl-sn-glycero-3-phosphate + CoA. It catalyses the reaction (9Z)-hexadecenoyl-CoA + 1-hexadecanoyl-sn-glycero-3-phosphocholine = 1-hexadecanoyl-2-(9Z-hexadecenoyl)-sn-glycero-3-phosphocholine + CoA. It carries out the reaction 1-hexadecanoyl-sn-glycero-3-phosphoethanolamine + (9Z)-octadecenoyl-CoA = 1-hexadecanoyl-2-(9Z-octadecenoyl)-sn-glycero-3-phosphoethanolamine + CoA. The enzyme catalyses 1-hexadecanoyl-sn-glycero-3-phosphoethanolamine + (9Z)-hexadecenoyl-CoA = 1-hexadecanoyl-2-(9Z)-hexadecenoyl-sn-glycero-3-phosphoethanolamine + CoA. The catalysed reaction is 1-(9Z-octadecenoyl)-sn-glycero-3-phospho-L-serine + hexadecanoyl-CoA = 1-(9Z)-octadecenoyl-2-hexadecanoyl-sn-glycero-3-phosphoserine + CoA. It catalyses the reaction (9Z,12Z)-octadecadienoyl-CoA + 1-hexadecanoyl-sn-glycero-3-phosphocholine = 1-hexadecanoyl-2-(9Z,12Z-octadecadienoyl)-sn-glycero-3-phosphocholine + CoA. It carries out the reaction 1-hexadecanoyl-sn-glycero-3-phosphocholine + (9Z)-octadecenoyl-CoA = 1-hexadecanoyl-2-(9Z-octadecenoyl)-sn-glycero-3-phosphocholine + CoA. The enzyme catalyses 1-hexadecanoyl-sn-glycero-3-phosphate + (9Z)-hexadecenoyl-CoA = 1-hexadecanoyl-2-[(9Z)-hexadec-9-enoyl]-sn-glycero-3-phosphate + CoA. The catalysed reaction is 1-hexadecanoyl-sn-glycero-3-phosphate + (9Z)-octadecenoyl-CoA = 1-hexadecanoyl-2-(9Z-octadecenoyl)-sn-glycero-3-phosphate + CoA. It catalyses the reaction a 1-O-(1Z-alkenyl)-sn-glycero-3-phosphocholine + (9Z)-octadecenoyl-CoA = 1-O-(1Z)-alkenyl-2-(9Z)-octadecenoyl-sn-glycero-3-phosphocholine + CoA. It carries out the reaction a 1-O-(1Z-alkenyl)-sn-glycero-3-phosphoethanolamine + (9Z)-octadecenoyl-CoA = 1-O-(1Z)-alkenyl-2-(9Z)-octadecenoyl-sn-glycero-3-phosphoethanolamine + CoA. The enzyme catalyses 1-octadecanoyl-sn-glycero-3-phosphoethanolamine + (9Z)-octadecenoyl-CoA = 1-octadecanoyl-2-(9Z-octadecenoyl)-sn-glycero-3-phosphoethanolamine + CoA. The catalysed reaction is 1-octadecanoyl-sn-glycero-3-phosphocholine + (9Z)-octadecenoyl-CoA = 1-octadecanoyl-2-(9Z-octadecenoyl)-sn-glycero-3-phosphocholine + CoA. It catalyses the reaction 1-(9Z-octadecenoyl)-sn-glycero-3-phosphoethanolamine + (9Z)-octadecenoyl-CoA = 1,2-di-(9Z-octadecenoyl)-sn-glycero-3-phosphoethanolamine + CoA. Its pathway is lipid metabolism; phospholipid metabolism. Its activity is regulated as follows. Partially inhibited by thimerosal. Its function is as follows. Acyltransferase which catalyzes the transfer of an acyl group from an acyl-CoA to a lysophospholipid leading to the production of a phospholipid and participates in the reacylation step of the phospholipid remodeling pathway also known as the Lands cycle. Catalyzes preferentially the acylation of lysophosphatidylethanolamine (1-acyl-sn-glycero-3-phosphoethanolamine or LPE) and lysophosphatidic acid (LPA) and to a lesser extend lysophosphatidylcholine (LPC) and lysophosphatidylserine (LPS). Prefers oleoyl-CoA as the acyl donor. May be involved in chondrocyte differentiation. This is Membrane-bound glycerophospholipid O-acyltransferase 2 from Homo sapiens (Human).